Here is a 412-residue protein sequence, read N- to C-terminus: Poly-beta-1,6-N-acetyl-D-glucosamine synthase (412 aa).

A run of 4 helical transmembrane segments spans residues 6 to 26, 298 to 318, 332 to 352, and 366 to 386; these read FLLF…IYFY, IISI…FITA, IFLL…TVAL, and LIFV…VVLV.

Belongs to the glycosyltransferase 2 family.

It localises to the cell membrane. Functionally, N-acetylglucosaminyltransferase that catalyzes the polymerization of single monomer units of UDP-N-acetylglucosamine to produce the linear homomer poly-beta-1,6-N-acetyl-D-glucosamine (PNAG, also referred to as PIA), a biofilm adhesin polysaccharide. Requires IcaD for full activity. This chain is Poly-beta-1,6-N-acetyl-D-glucosamine synthase (icaA), found in Staphylococcus aureus (strain NCTC 8325 / PS 47).